The chain runs to 1368 residues: Protein suppressor 2 of zeste (1368 aa).

The RING-type zinc finger occupies 35–74; the sequence is CRLCRGYMIDPTTVDYCYHTYCRSCILKHLLRAVYCPECK. Disordered regions lie at residues 245–321, 448–628, 640–718, 861–903, 935–1001, 1057–1103, 1116–1141, 1161–1193, 1211–1271, and 1298–1322; these read SRIN…FKSL, QPLQ…QQQQ, TLPT…AVPQ, AGGK…KRSC, ALSG…NGTA, SANP…STSN, ISAN…GDDL, AASS…ASVR, STAA…KKPT, and VLSS…RPEP. Residues 449–461 are compositionally biased toward polar residues; the sequence is PLQQSASNPDSKY. Low complexity predominate over residues 462–495; that stretch reads SPNASPMSSCSSSTNGSSSSLGTADASTSTSTSS. Positions 496-506 are enriched in basic residues; it reads SHRKRKKKHSK. Low complexity-rich tracts occupy residues 599–628 and 672–689; these read AEPE…QQQQ and PKQQ…VLQQ. Polar residues-rich tracts occupy residues 936 to 953 and 962 to 977; these read LSGQ…NAYR and LRNT…SKSS. 4 stretches are compositionally biased toward low complexity: residues 1078-1099, 1119-1138, 1161-1183, and 1231-1263; these read NNNN…NNNN, NSNG…TTNG, AASS…NANA, and STSN…ATSP.

It is found in the nucleus. Its function is as follows. Regulates expression of the homeotic selector genes by influencing higher-order chromatin structure through interaction with other proteins. The chain is Protein suppressor 2 of zeste (Su(z)2) from Drosophila melanogaster (Fruit fly).